A 562-amino-acid polypeptide reads, in one-letter code: Protein FAM222B (562 aa).

2 stretches are compositionally biased toward low complexity: residues 147–167 and 183–201; these read PQAQ…LAHA and ALSH…HPQQ. Disordered regions lie at residues 147–242 and 537–562; these read PQAQ…PPNV and AHRA…PGYR.

Belongs to the FAM222 family.

The polypeptide is Protein FAM222B (Fam222b) (Mus musculus (Mouse)).